The primary structure comprises 342 residues: Phenylalanine--tRNA ligase alpha subunit (342 aa).

E257 serves as a coordination point for Mg(2+).

It belongs to the class-II aminoacyl-tRNA synthetase family. Phe-tRNA synthetase alpha subunit type 1 subfamily. Tetramer of two alpha and two beta subunits. Mg(2+) serves as cofactor.

Its subcellular location is the cytoplasm. The enzyme catalyses tRNA(Phe) + L-phenylalanine + ATP = L-phenylalanyl-tRNA(Phe) + AMP + diphosphate + H(+). The chain is Phenylalanine--tRNA ligase alpha subunit (pheS) from Chlamydia trachomatis serovar D (strain ATCC VR-885 / DSM 19411 / UW-3/Cx).